Here is a 391-residue protein sequence, read N- to C-terminus: Choline/ethanolaminephosphotransferase 1 (391 aa).

The Lumenal segment spans residues 1-49 (MGYFVPDSHIENLKSYKYQSEDRSLVSKYFLKPFWQRFCHIFPTWMAPN). Residues 50 to 69 (IITLSGFAFIVINVLTVFYY) form a helical membrane-spanning segment. The Cytoplasmic portion of the chain corresponds to 70-172 (DPNLNTDTPR…YHTHTLYLSE (103 aa)). The chain crosses the membrane as a helical span at residues 173–193 (FSGPVEGILIVCVSLILTGIY). Topologically, residues 194 to 211 (GKQVIWHTYLFTITVGDK) are lumenal. The helical transmembrane segment at 212–232 (VIDVDTLDIVFSLAVFGLVMN) threads the bilayer. At 233–264 (ALSAKRNVDKYYRNSTSSANNITQIEQDSAIK) the chain is on the cytoplasmic side. A helical transmembrane segment spans residues 265–282 (GLLPFFAYYASIALLVWM). Residues 283-285 (QPS) are Lumenal-facing. A helical membrane pass occupies residues 286–308 (FITLSFILSVGFTGAFTVGRIIV). At 309 to 321 (CHLTKQSFPMFNA) the chain is on the cytoplasmic side. Residues 322–342 (PMLIPLCQIVLYKICLSLWGI) form a helical membrane-spanning segment. Residues 343–346 (ESNK) are Lumenal-facing. Residues 347–367 (IVFALSWLGFGLSLGVHIMFM) traverse the membrane as a helical segment. The Cytoplasmic portion of the chain corresponds to 368–391 (NDIIHEFTEYLDVYALSIKRSKLT).

This sequence belongs to the CDP-alcohol phosphatidyltransferase class-I family. The cofactor is Mg(2+).

The protein resides in the golgi apparatus membrane. It carries out the reaction CDP-ethanolamine + a 1,2-diacyl-sn-glycerol = a 1,2-diacyl-sn-glycero-3-phosphoethanolamine + CMP + H(+). The enzyme catalyses CDP-choline + a 1,2-diacyl-sn-glycerol = a 1,2-diacyl-sn-glycero-3-phosphocholine + CMP + H(+). It catalyses the reaction CDP-N-methylethanolamine + a 1,2-diacyl-sn-glycerol = a 1,2-diacyl-sn-glycero-3-phospho-N-methylethanolamine + CMP + H(+). The catalysed reaction is CDP-N,N-dimethylethanolamine + a 1,2-diacyl-sn-glycerol = a 1,2-diacyl-sn-glycero-3-phospho-N,N-dimethylethanolamine + CMP + H(+). It carries out the reaction 1,2-di-(9Z-octadecenoyl)-glycerol + CDP-choline = 1,2-di-(9Z-octadecenoyl)-sn-glycero-3-phosphocholine + CMP + H(+). The enzyme catalyses 1,2-di-(9Z-octadecenoyl)-glycerol + CDP-ethanolamine = 1,2-di-(9Z-octadecenoyl)-sn-glycero-3-phosphoethanolamine + CMP + H(+). Its pathway is phospholipid metabolism; phosphatidylethanolamine biosynthesis; phosphatidylethanolamine from ethanolamine: step 3/3. It functions in the pathway phospholipid metabolism; phosphatidylcholine biosynthesis; phosphatidylcholine from phosphocholine: step 2/2. Its activity is regulated as follows. Requires a divalent cation activator, and is inhibited by CMP. Activated by phospholipids, especially phosphatidylcholine. Catalyzes the final step in the CDP-ethanolamine route leading to phosphatidylethanolamine (PE). Can also catalyze the formation of phosphatidylcholine (PC) from CDP-choline, but does not substantially contribute to PC biosynthesis. Preferentially uses CDP-dimethylethanolamine and CDP-propanolamine as aminoalcohol substrates. Shows highest activity toward di-unsaturated diacylglycerol species as lipid substrates. The CDP-ethanolamine pathway may play a role in maintaining the proper PE species distribution. The sequence is that of Choline/ethanolaminephosphotransferase 1 (EPT1) from Saccharomyces cerevisiae (strain ATCC 204508 / S288c) (Baker's yeast).